The following is a 111-amino-acid chain: Cytochrome b-c1 complex subunit 7 (111 aa).

Residue Ala-2 is modified to N-acetylalanine. The residue at position 19 (Lys-19) is an N6-acetyllysine. Lys-78 is subject to N6-acetyllysine; alternate. Lys-78 carries the N6-succinyllysine; alternate modification. At Lys-83 the chain carries N6-acetyllysine. N6-acetyllysine; alternate is present on Lys-88. Lys-88 carries the post-translational modification N6-succinyllysine; alternate. Lys-96 carries the N6-acetyllysine modification.

This sequence belongs to the UQCRB/QCR7 family. In terms of assembly, component of the ubiquinol-cytochrome c oxidoreductase (cytochrome b-c1 complex, complex III, CIII), a multisubunit enzyme composed of 11 subunits. The complex is composed of 3 respiratory subunits cytochrome b, cytochrome c1 and Rieske protein UQCRFS1, 2 core protein subunits UQCRC1/QCR1 and UQCRC2/QCR2, and 6 low-molecular weight protein subunits UQCRH/QCR6, UQCRB/QCR7, UQCRQ/QCR8, UQCR10/QCR9, UQCR11/QCR10 and subunit 9, the cleavage product of Rieske protein UQCRFS1. The complex exists as an obligatory dimer and forms supercomplexes (SCs) in the inner mitochondrial membrane with NADH-ubiquinone oxidoreductase (complex I, CI) and cytochrome c oxidase (complex IV, CIV), resulting in different assemblies (supercomplex SCI(1)III(2)IV(1) and megacomplex MCI(2)III(2)IV(2)).

It localises to the mitochondrion inner membrane. In terms of biological role, component of the ubiquinol-cytochrome c oxidoreductase, a multisubunit transmembrane complex that is part of the mitochondrial electron transport chain which drives oxidative phosphorylation. The respiratory chain contains 3 multisubunit complexes succinate dehydrogenase (complex II, CII), ubiquinol-cytochrome c oxidoreductase (cytochrome b-c1 complex, complex III, CIII) and cytochrome c oxidase (complex IV, CIV), that cooperate to transfer electrons derived from NADH and succinate to molecular oxygen, creating an electrochemical gradient over the inner membrane that drives transmembrane transport and the ATP synthase. The cytochrome b-c1 complex catalyzes electron transfer from ubiquinol to cytochrome c, linking this redox reaction to translocation of protons across the mitochondrial inner membrane, with protons being carried across the membrane as hydrogens on the quinol. In the process called Q cycle, 2 protons are consumed from the matrix, 4 protons are released into the intermembrane space and 2 electrons are passed to cytochrome c. This chain is Cytochrome b-c1 complex subunit 7 (UQCRB), found in Bos taurus (Bovine).